A 382-amino-acid polypeptide reads, in one-letter code: D-galactonate dehydratase (382 aa).

Asp183 lines the Mg(2+) pocket. His185 (proton donor) is an active-site residue. Mg(2+) is bound by residues Glu209 and Glu235. Catalysis depends on His285, which acts as the Proton acceptor.

This sequence belongs to the mandelate racemase/muconate lactonizing enzyme family. GalD subfamily. Mg(2+) serves as cofactor.

It carries out the reaction D-galactonate = 2-dehydro-3-deoxy-D-galactonate + H2O. Its pathway is carbohydrate acid metabolism; D-galactonate degradation; D-glyceraldehyde 3-phosphate and pyruvate from D-galactonate: step 1/3. Functionally, catalyzes the dehydration of D-galactonate to 2-keto-3-deoxy-D-galactonate. The chain is D-galactonate dehydratase from Klebsiella pneumoniae (strain 342).